Here is a 590-residue protein sequence, read N- to C-terminus: Regulatory solute carrier protein family 1 member 1 (590 aa).

Disordered stretches follow at residues 1–116, 144–234, 277–331, and 359–466; these read MSSS…TQGL, EEGW…PDSE, SPSS…AEES, and EEVT…SHRT. The span at 16 to 35 shows a compositional bias: polar residues; sequence SSGQSPEAGNPTSLARSVSA. Residues 78-91 show a composition bias toward low complexity; sequence SPCAAAAAPSSAMP. Over residues 150–161 the composition is skewed to polar residues; it reads ENQNPSQVNDLQ. Composition is skewed to basic and acidic residues over residues 162–179 and 188–203; these read QHQE…RDAP and PGER…REAT. The segment covering 313–331 has biased composition (low complexity); it reads SSSSVCGSSQPPAESAEES. Over residues 362 to 376 the composition is skewed to polar residues; sequence TCQSEGTAWGQTRVN. 2 stretches are compositionally biased toward basic and acidic residues: residues 380–395 and 404–420; these read RWTE…DRPQ and VKTE…RIED. The span at 451–465 shows a compositional bias: polar residues; it reads SVTVTSAETSNQSHR. The UBA domain occupies 544–584; sequence GFPAADIDRILRAGFTLQEALGALHRVGGNADLALLVLLAK.

In terms of assembly, interacts with YRDC. Highly expressed in renal outer medulla, renal inner medulla, duodenum, ileum and jejunum. Moderately expressed in renal outer cortex, renal papilla, brain and liver.

It localises to the cell membrane. It is found in the nucleus. Its subcellular location is the golgi apparatus. The protein localises to the trans-Golgi network. Mediates transcriptional and post-transcriptional regulation of SLC5A1. Inhibits a dynamin and PKC-dependent exocytotic pathway of SLC5A1. Also involved in transcriptional regulation of SLC22A2. Exhibits glucose-dependent, short-term inhibition of SLC5A1 and SLC22A2 by inhibiting the release of vesicles from the trans-Golgi network. The sequence is that of Regulatory solute carrier protein family 1 member 1 (RSC1A1) from Oryctolagus cuniculus (Rabbit).